A 681-amino-acid chain; its full sequence is Phenylalanine--tRNA ligase beta subunit (681 aa).

Residues 288–363 (PARETVLLRP…RIHGYDQIPE (76 aa)) enclose the B5 domain. Residues D341, D347, E350, and E351 each contribute to the Mg(2+) site. Residues 586–681 (SSFPSIQRDL…EKQLEAVLLR (96 aa)) form the FDX-ACB domain.

The protein belongs to the phenylalanyl-tRNA synthetase beta subunit family. Type 1 subfamily. As to quaternary structure, tetramer of two alpha and two beta subunits. Requires Mg(2+) as cofactor.

It is found in the cytoplasm. The enzyme catalyses tRNA(Phe) + L-phenylalanine + ATP = L-phenylalanyl-tRNA(Phe) + AMP + diphosphate + H(+). This chain is Phenylalanine--tRNA ligase beta subunit, found in Rhodopirellula baltica (strain DSM 10527 / NCIMB 13988 / SH1).